A 152-amino-acid chain; its full sequence is MVVTATRLDRLSEAVERALPEGTELVEARFSRGPLLTLLVDREGGPVDHEFCARIISIVAPALEEEGYSGMIEVSSPGIERPLTRPSHFRRFIGRRVRVRVGEPVDGRRNFTGVIERVADAGFVLRLSEDGEEVELPFGSVTRAHLKEDLDK.

It belongs to the RimP family.

It localises to the cytoplasm. Its function is as follows. Required for maturation of 30S ribosomal subunits. This Rubrobacter xylanophilus (strain DSM 9941 / JCM 11954 / NBRC 16129 / PRD-1) protein is Ribosome maturation factor RimP.